Here is a 670-residue protein sequence, read N- to C-terminus: DNA ligase (670 aa).

NAD(+) is bound by residues 33–37, 82–83, and Glu114; these read DVEYD and SL. Lys116 serves as the catalytic N6-AMP-lysine intermediate. Positions 137, 174, 291, and 315 each coordinate NAD(+). 4 residues coordinate Zn(2+): Cys409, Cys412, Cys427, and Cys433. A BRCT domain is found at 593 to 670; the sequence is DQELPLEGKV…TEEDLIALIS (78 aa).

It belongs to the NAD-dependent DNA ligase family. LigA subfamily. Mg(2+) is required as a cofactor. Mn(2+) serves as cofactor.

The enzyme catalyses NAD(+) + (deoxyribonucleotide)n-3'-hydroxyl + 5'-phospho-(deoxyribonucleotide)m = (deoxyribonucleotide)n+m + AMP + beta-nicotinamide D-nucleotide.. Its function is as follows. DNA ligase that catalyzes the formation of phosphodiester linkages between 5'-phosphoryl and 3'-hydroxyl groups in double-stranded DNA using NAD as a coenzyme and as the energy source for the reaction. It is essential for DNA replication and repair of damaged DNA. The polypeptide is DNA ligase (Vibrio atlanticus (strain LGP32) (Vibrio splendidus (strain Mel32))).